The sequence spans 200 residues: MARYTGPRGRRDRRAGVMLSSMRKNPLEKKPYPPGEHGRDRQRQTEYGLRLMEKQKARWYYGVSERQFRRAYEEAIRQPGVSGENLLRLMELRMDNVVYRMGFATSRPQARQLVVHGHFLLNGRKHNIPSATLKPGDVITVRDKSRRLQPIQEAVEQVVAVPAWLEADHENFTGRVLHTPSRDEIDAPVEEQLIIEFYSR.

The segment at 1 to 43 (MARYTGPRGRRDRRAGVMLSSMRKNPLEKKPYPPGEHGRDRQR) is disordered. The segment covering 25–43 (NPLEKKPYPPGEHGRDRQR) has biased composition (basic and acidic residues). Residues 92–158 (LRMDNVVYRM…QPIQEAVEQV (67 aa)) enclose the S4 RNA-binding domain.

It belongs to the universal ribosomal protein uS4 family. In terms of assembly, part of the 30S ribosomal subunit. Contacts protein S5. The interaction surface between S4 and S5 is involved in control of translational fidelity.

One of the primary rRNA binding proteins, it binds directly to 16S rRNA where it nucleates assembly of the body of the 30S subunit. Its function is as follows. With S5 and S12 plays an important role in translational accuracy. This Rubrobacter xylanophilus (strain DSM 9941 / JCM 11954 / NBRC 16129 / PRD-1) protein is Small ribosomal subunit protein uS4.